A 350-amino-acid polypeptide reads, in one-letter code: Sterol-4-alpha-carboxylate 3-dehydrogenase ERG26, decarboxylating (350 aa).

NADP(+)-binding positions include 12–18 (GGSGFLG), 63–64 (DL), and 85–87 (SAS). Residues S125 and Y152 each coordinate substrate. NADP(+) contacts are provided by residues Y152, K156, and 179–182 (PAGI). The active-site Proton donor is K156.

The protein belongs to the 3-beta-HSD family. As to quaternary structure, heterotetramer of ERG25, ERG26, ERG27 and ERG28. ERG28 acts as a scaffold to tether ERG27 and other 4,4-demethylation-related enzymes, forming a demethylation enzyme complex, in the endoplasmic reticulum.

The protein resides in the endoplasmic reticulum membrane. The catalysed reaction is 4beta-methylzymosterol-4alpha-carboxylate + NADP(+) = 3-dehydro-4-methylzymosterol + CO2 + NADPH. It functions in the pathway steroid biosynthesis; zymosterol biosynthesis; zymosterol from lanosterol: step 4/6. Functionally, sterol-4-alpha-carboxylate 3-dehydrogenase; part of the third module of ergosterol biosynthesis pathway that includes the late steps of the pathway. ERG26 is a catalytic component of the C-4 demethylation complex that catalyzes the oxidative decarboxylation that results in a reduction of the 3-beta-hydroxy group at the C-3 carbon to an oxo group. The third module or late pathway involves the ergosterol synthesis itself through consecutive reactions that mainly occur in the endoplasmic reticulum (ER) membrane. Firstly, the squalene synthase ERG9 catalyzes the condensation of 2 farnesyl pyrophosphate moieties to form squalene, which is the precursor of all steroids. Squalene synthase is crucial for balancing the incorporation of farnesyl diphosphate (FPP) into sterol and nonsterol isoprene synthesis. Secondly, the squalene epoxidase ERG1 catalyzes the stereospecific oxidation of squalene to (S)-2,3-epoxysqualene, which is considered to be a rate-limiting enzyme in steroid biosynthesis. Then, the lanosterol synthase ERG7 catalyzes the cyclization of (S)-2,3 oxidosqualene to lanosterol, a reaction that forms the sterol core. In the next steps, lanosterol is transformed to zymosterol through a complex process involving various demethylation, reduction and desaturation reactions. The lanosterol 14-alpha-demethylase ERG11 (also known as CYP51) catalyzes C14-demethylation of lanosterol to produce 4,4'-dimethyl cholesta-8,14,24-triene-3-beta-ol, which is critical for ergosterol biosynthesis. The C-14 reductase ERG24 reduces the C14=C15 double bond of 4,4-dimethyl-cholesta-8,14,24-trienol to produce 4,4-dimethyl-cholesta-8,24-dienol. 4,4-dimethyl-cholesta-8,24-dienol is substrate of the C-4 demethylation complex ERG25-ERG26-ERG27 in which ERG25 catalyzes the three-step monooxygenation required for the demethylation of 4,4-dimethyl and 4alpha-methylsterols, ERG26 catalyzes the oxidative decarboxylation that results in a reduction of the 3-beta-hydroxy group at the C-3 carbon to an oxo group, and ERG27 is responsible for the reduction of the keto group on the C-3. ERG28 has a role as a scaffold to help anchor ERG25, ERG26 and ERG27 to the endoplasmic reticulum and ERG29 regulates the activity of the iron-containing C4-methylsterol oxidase ERG25. Then, the sterol 24-C-methyltransferase ERG6 catalyzes the methyl transfer from S-adenosyl-methionine to the C-24 of zymosterol to form fecosterol. The C-8 sterol isomerase ERG2 catalyzes the reaction which results in unsaturation at C-7 in the B ring of sterols and thus converts fecosterol to episterol. The sterol-C5-desaturase ERG3 then catalyzes the introduction of a C-5 double bond in the B ring to produce 5-dehydroepisterol. The C-22 sterol desaturase ERG5 further converts 5-dehydroepisterol into ergosta-5,7,22,24(28)-tetraen-3beta-ol by forming the C-22(23) double bond in the sterol side chain. Finally, ergosta-5,7,22,24(28)-tetraen-3beta-ol is substrate of the C-24(28) sterol reductase ERG4 to produce ergosterol. This is Sterol-4-alpha-carboxylate 3-dehydrogenase ERG26, decarboxylating from Candida albicans (strain SC5314 / ATCC MYA-2876) (Yeast).